The primary structure comprises 117 residues: Large ribosomal subunit protein bL20c (117 aa).

The protein belongs to the bacterial ribosomal protein bL20 family.

The protein resides in the plastid. It is found in the chloroplast. In terms of biological role, binds directly to 23S ribosomal RNA and is necessary for the in vitro assembly process of the 50S ribosomal subunit. It is not involved in the protein synthesizing functions of that subunit. The polypeptide is Large ribosomal subunit protein bL20c (Manihot esculenta (Cassava)).